We begin with the raw amino-acid sequence, 82 residues long: Small ribosomal subunit protein bS16 (82 aa).

It belongs to the bacterial ribosomal protein bS16 family.

The sequence is that of Small ribosomal subunit protein bS16 from Rippkaea orientalis (strain PCC 8801 / RF-1) (Cyanothece sp. (strain PCC 8801)).